The primary structure comprises 176 residues: Ribosome maturation factor RimM (176 aa).

Residues 94–176 (KDEFFYFEIL…RFGFEILQNS (83 aa)) enclose the PRC barrel domain.

Belongs to the RimM family. In terms of assembly, binds ribosomal protein uS19.

The protein localises to the cytoplasm. An accessory protein needed during the final step in the assembly of 30S ribosomal subunit, possibly for assembly of the head region. Essential for efficient processing of 16S rRNA. May be needed both before and after RbfA during the maturation of 16S rRNA. It has affinity for free ribosomal 30S subunits but not for 70S ribosomes. This is Ribosome maturation factor RimM from Campylobacter hominis (strain ATCC BAA-381 / DSM 21671 / CCUG 45161 / LMG 19568 / NCTC 13146 / CH001A).